Reading from the N-terminus, the 389-residue chain is Phosphoglycerate kinase (389 aa).

Substrate is bound by residues 21 to 23, Arg-36, 59 to 62, Arg-112, and Arg-145; these read DLN and HLGR. ATP contacts are provided by residues Lys-196, Glu-318, and 344–347; that span reads GGDS.

The protein belongs to the phosphoglycerate kinase family. As to quaternary structure, monomer.

It localises to the cytoplasm. It catalyses the reaction (2R)-3-phosphoglycerate + ATP = (2R)-3-phospho-glyceroyl phosphate + ADP. Its pathway is carbohydrate degradation; glycolysis; pyruvate from D-glyceraldehyde 3-phosphate: step 2/5. This is Phosphoglycerate kinase from Desulfovibrio desulfuricans (strain ATCC 27774 / DSM 6949 / MB).